The primary structure comprises 279 residues: Methyltransferase ausD (279 aa).

Residues 124–125 and 152–153 contribute to the S-adenosyl-L-methionine site; these read DI and DV.

The protein belongs to the class I-like SAM-binding methyltransferase superfamily. As to quaternary structure, homodimer.

Its pathway is secondary metabolite biosynthesis; terpenoid biosynthesis. Functionally, methyltransferase; part of the gene cluster A that mediates the biosynthesis of the fungal meroterpenoid acetoxydehydroaustin. The first step of the pathway is the synthesis of 3,5-dimethylorsellinic acid by the polyketide synthase ausA. 3,5-dimethylorsellinic acid is then prenylated by the polyprenyl transferase ausN. Further epoxidation by the FAD-dependent monooxygenase ausM and cyclization by the probable terpene cyclase ausL lead to the formation of protoaustinoid A. Protoaustinoid A is then oxidized to spiro-lactone preaustinoid A3 by the combined action of the FAD-binding monooxygenases ausB and ausC, and the dioxygenase ausE. Acid-catalyzed keto-rearrangement and ring contraction of the tetraketide portion of preaustinoid A3 by ausJ lead to the formation of preaustinoid A4. The aldo-keto reductase ausK, with the help of ausH, is involved in the next step by transforming preaustinoid A4 into isoaustinone which is in turn hydroxylated by the P450 monooxygenase ausI to form austinolide. The cytochrome P450 monooxygenase ausG then modifies austinolide to austinol. Austinol is further acetylated to austin by the O-acetyltransferase ausP, which spontaneously changes to dehydroaustin. The cytochrome P450 monooxygenase then converts dehydroaustin is into 7-dehydrodehydroaustin. The hydroxylation catalyzed by ausR permits the second O-acetyltransferase ausQ to add an additional acetyl group to the molecule, leading to the formation of acetoxydehydroaustin. Due to genetic rearrangements of the clusters and the subsequent loss of some enzymes, the end product of the Penicillium brasilianum austinoid biosynthesis clusters is acetoxydehydroaustin. This is Methyltransferase ausD from Penicillium brasilianum.